The following is a 429-amino-acid chain: Glutamyl-tRNA reductase (429 aa).

Residues T50–R53, S116, E121–Q123, and Q127 contribute to the substrate site. The Nucleophile role is filled by C51. G196–A201 provides a ligand contact to NADP(+).

This sequence belongs to the glutamyl-tRNA reductase family. As to quaternary structure, homodimer.

It carries out the reaction (S)-4-amino-5-oxopentanoate + tRNA(Glu) + NADP(+) = L-glutamyl-tRNA(Glu) + NADPH + H(+). Its pathway is porphyrin-containing compound metabolism; protoporphyrin-IX biosynthesis; 5-aminolevulinate from L-glutamyl-tRNA(Glu): step 1/2. In terms of biological role, catalyzes the NADPH-dependent reduction of glutamyl-tRNA(Glu) to glutamate 1-semialdehyde (GSA). This is Glutamyl-tRNA reductase from Thermodesulfovibrio yellowstonii (strain ATCC 51303 / DSM 11347 / YP87).